Consider the following 225-residue polypeptide: UPF0173 metal-dependent hydrolase Pisl_0803 (225 aa).

The protein belongs to the UPF0173 family.

The protein is UPF0173 metal-dependent hydrolase Pisl_0803 of Pyrobaculum islandicum (strain DSM 4184 / JCM 9189 / GEO3).